The following is a 1318-amino-acid chain: DNA-directed RNA polymerase subunit beta' (1318 aa).

Cysteine 60, cysteine 62, cysteine 75, and cysteine 78 together coordinate Zn(2+). Aspartate 535, aspartate 537, and aspartate 539 together coordinate Mg(2+). 4 residues coordinate Zn(2+): cysteine 890, cysteine 967, cysteine 974, and cysteine 977.

It belongs to the RNA polymerase beta' chain family. As to quaternary structure, the RNAP catalytic core consists of 2 alpha, 1 beta, 1 beta' and 1 omega subunit. When a sigma factor is associated with the core the holoenzyme is formed, which can initiate transcription. Requires Mg(2+) as cofactor. It depends on Zn(2+) as a cofactor.

The catalysed reaction is RNA(n) + a ribonucleoside 5'-triphosphate = RNA(n+1) + diphosphate. Its function is as follows. DNA-dependent RNA polymerase catalyzes the transcription of DNA into RNA using the four ribonucleoside triphosphates as substrates. The chain is DNA-directed RNA polymerase subunit beta' from Rhodococcus jostii (strain RHA1).